Here is a 352-residue protein sequence, read N- to C-terminus: Protein YpbB (352 aa).

Interacts with RecS and SSB (ssbA); the 6 C-terminal residues of SSB are required for interaction with YpbB.

The protein localises to the cytoplasm. It is found in the nucleoid. This chain is Protein YpbB (ypbB), found in Bacillus subtilis (strain 168).